We begin with the raw amino-acid sequence, 570 residues long: Formate--tetrahydrofolate ligase (570 aa).

65–72 (TPLGEGKT) lines the ATP pocket.

This sequence belongs to the formate--tetrahydrofolate ligase family.

It catalyses the reaction (6S)-5,6,7,8-tetrahydrofolate + formate + ATP = (6R)-10-formyltetrahydrofolate + ADP + phosphate. It participates in one-carbon metabolism; tetrahydrofolate interconversion. This chain is Formate--tetrahydrofolate ligase, found in Herpetosiphon aurantiacus (strain ATCC 23779 / DSM 785 / 114-95).